The sequence spans 208 residues: Putative ADP-ribose pyrophosphatase YjhB (208 aa).

One can recognise a Nudix hydrolase domain in the interval 69-195 (TPKADVRGAV…NTPSQLSMLF (127 aa)). The Nudix box motif lies at 100-121 (GFCEIGLSPAENVVKEIKEESG). Glutamate 115 and glutamate 119 together coordinate Mg(2+).

This sequence belongs to the Nudix hydrolase family. Mg(2+) serves as cofactor. Mn(2+) is required as a cofactor.

In terms of biological role, probably mediates the hydrolysis of some nucleoside diphosphate derivatives. The polypeptide is Putative ADP-ribose pyrophosphatase YjhB (yjhB) (Bacillus subtilis (strain 168)).